The sequence spans 296 residues: MIIGSHVSMSGRKMFLGSVETSIENGANALMIYTGAPQNTRRKAIEDLRIPEGRALLTEHDFKDVVVHAPYIVNLGNTFKPESFKFAVEFLKEEVKRADALGASQLVLHPGSHVGAGPDAAIASITEGLNQIITPEQNVKIALETMAGKGTEVATNFEQIQQIITGVEHNEKLSVCFDTCHTNDAGYDVKNHFDDVMDEFDQIIGLQKIGVIHLNDSKNEMGSHKDRHENLGFGTIGFKALHYIANFDKFQNVPKILETPWVKDPDAKKHSPYQLELAMLKSGRFDDTLIEKIINN.

9 residues coordinate Zn(2+): H68, H109, E144, D178, H181, H213, D226, H228, and E258.

Belongs to the AP endonuclease 2 family. Zn(2+) serves as cofactor.

The catalysed reaction is Endonucleolytic cleavage to 5'-phosphooligonucleotide end-products.. Functionally, endonuclease IV plays a role in DNA repair. It cleaves phosphodiester bonds at apurinic or apyrimidinic (AP) sites, generating a 3'-hydroxyl group and a 5'-terminal sugar phosphate. The sequence is that of Probable endonuclease 4 from Pediococcus pentosaceus (strain ATCC 25745 / CCUG 21536 / LMG 10740 / 183-1w).